The chain runs to 634 residues: Genetic interactor of prohibitins 3, mitochondrial (634 aa).

The transit peptide at 1-40 (MFSRLVLLRKVSISLGRYYSSQAHPQTYIYNLLSKSKCRS) directs the protein to the mitochondrion. Residues 171-378 (IPKLQQVLST…LFDVPGFTTN (208 aa)) form the CP-type G domain.

The protein belongs to the TRAFAC class YlqF/YawG GTPase family. GEP3 subfamily.

Its subcellular location is the mitochondrion. Functionally, may be involved in the mitochondrial lipid metabolism. In Candida dubliniensis (strain CD36 / ATCC MYA-646 / CBS 7987 / NCPF 3949 / NRRL Y-17841) (Yeast), this protein is Genetic interactor of prohibitins 3, mitochondrial (GEP3).